The sequence spans 947 residues: MSLPSRQTAIIVNPPPPEYINTKKNGRLTNQLQYLQKVVLKDLWKHSFSWPFQRPVDAVKLKLPDYYTIIKNPMDLNTIKKRLENKYYVKASECIEDFNTMFSNCYLYNKPGDDIVLMAQALEKLFVQKLSQMPQEEQVVGGKERIKKGTQQNIAVFSAKEKSSPNATEKVFKQQAIPSVFPKTSVSPLNVAQGASVNSSSQSVAQVTKGVKRKADTTTPATSVVKASSEFSPTFTEKSVTLPPIKENMPKNVLPDSQQQYNVVKSVKVTEQLRHCSEILKEMLAKKHFSYAWPFYNPVDVNALGLHNYYDIVKNPMDLGTIKEKMDNQEYKDAYKFAADVRLMFMNCYKYNPPDHEVVTMARMLQDVFETHFSKIPVEPVESMPLCYIKTDITETTGRENTNEASSEGNSSGDSEDERVQRLAKLQEQLKAVHQQLQVLSQVPFRKLNKKKEKSKKEKKKEKVNNSNENPRKMCEQMRLKEKSKRNQPKKRKQQYIGQKSEDEDNAKPMNYDEKRQLSLNINKLPGDKLGRVVHIIQSREPSLSNSNPDEIEIDFETLKASTLRELEKYVSACLRKRPLKPPAKKIMMSKEELHSQKKQELEKRLLDVNNQLNSRKRQTKSEKTQPSKAVGSVSRLSESSSSSSSSSESESSSSDLSSSDSSGSESEMFPKFTEVKPNDSPSKENVKKMKNECILPEGRIGITQIECSVQDKTSANTTLVHQTTPSHVMPPNHHQLAFNYQELEHLQTVKNISPLQILPPSGDSEQLSNGITVMHPSGDNATTMLESECQAPVQKDIKIKNADSWKSLGKSVKPSGVMKSSDELFNQFRKAAIEKEVKARTQELIRKHLEQNTKEPKVSQENQRDLGNGLTVESFSNKIQNKCSGEEQKEHQQSLEAQDKSKLWLLKDRNLAREKEQERRRREAMAGTIDMTLQSDIMTMFENNFD.

The Bromo 1 domain occupies 27 to 133 (RLTNQLQYLQ…KLFVQKLSQM (107 aa)). Position 187 is a phosphoserine (S187). The Nuclear localization signal motif lies at 209–220 (KGVKRKADTTTP). Residues 267–376 (VKVTEQLRHC…DVFETHFSKI (110 aa)) enclose the Bromo 2 domain. Disordered stretches follow at residues 395 to 421 (ETTG…ERVQ), 444 to 512 (PFRK…PMNY), 610 to 690 (NNQL…VKKM), and 849 to 873 (HLEQ…GLTV). Residues 403–413 (NEASSEGNSSG) are compositionally biased toward low complexity. A coiled-coil region spans residues 417 to 470 (DERVQRLAKLQEQLKAVHQQLQVLSQVPFRKLNKKKEKSKKEKKKEKVNNSNEN). Residues 447–462 (KLNKKKEKSKKEKKKE) are compositionally biased toward basic residues. Residues 470 to 481 (NPRKMCEQMRLK) are compositionally biased toward basic and acidic residues. A compositionally biased stretch (basic residues) spans 482–494 (EKSKRNQPKKRKQ). The region spanning 500–582 (KSEDEDNAKP…ACLRKRPLKP (83 aa)) is the NET domain. A compositionally biased stretch (low complexity) spans 631–668 (VGSVSRLSESSSSSSSSSESESSSSDLSSSDSSGSESE). Basic and acidic residues-rich tracts occupy residues 674–690 (TEVK…VKKM) and 849–865 (HLEQ…ENQR).

The protein belongs to the BET family. In terms of assembly, interacts with SMARCE1. Interacts with mRNA splicing machinery proteins SRSF2, DDX5, HNRNPK and TARDBP. Interacts with the acetylated N-terminus of histone H1, H2, H3 and H4. Interacts with P-TEFb components CDK9 and CCNT1/cyclin-T1. Ubiquitinated in a SPOP-dependent manner, leading to proteasomal degradation.

It localises to the nucleus. Functionally, testis-specific chromatin protein that specifically binds histone H4 acetylated at 'Lys-5' and 'Lys-8' (H4K5ac and H4K8ac, respectively) and plays a key role in spermatogenesis. Required in late pachytene spermatocytes: plays a role in meiotic and post-meiotic cells by binding to acetylated histones at the promoter of specific meiotic and post-meiotic genes, facilitating their activation at the appropriate time. In the post-meiotic phase of spermatogenesis, binds to hyperacetylated histones and participates in their general removal from DNA. Also recognizes and binds a subset of butyrylated histones: able to bind histone H4 butyrylated at 'Lys-8' (H4K8ac), while it is not able to bind H4 butyrylated at 'Lys-5' (H4K5ac). Also acts as a component of the splicing machinery in pachytene spermatocytes and round spermatids and participates in 3'-UTR truncation of specific mRNAs in post-meiotic spermatids. Required for chromocenter organization, a structure comprised of peri-centromeric heterochromatin. The protein is Bromodomain testis-specific protein (BRDT) of Macaca fascicularis (Crab-eating macaque).